A 150-amino-acid chain; its full sequence is CCAAT/enhancer-binding protein gamma (150 aa).

Residue lysine 3 forms a Glycyl lysine isopeptide (Lys-Gly) (interchain with G-Cter in SUMO2) linkage. Residues 27–94 (GLQQVPQLVP…QKAQDTLQRV (68 aa)) form a disordered region. Low complexity predominate over residues 28–37 (LQQVPQLVPA). Residues 56 to 72 (SPMDRNSDEYRQRRERN) show a composition bias toward basic and acidic residues. In terms of domain architecture, bZIP spans 62-125 (SDEYRQRRER…SVLKDLFLEH (64 aa)). Residues 66 to 93 (RQRRERNNMAVKKSRLKSKQKAQDTLQR) form a basic motif region. Residues 97–118 (LKEENERLEAKIKLLTKELSVL) form a leucine-zipper region. Positions 129 to 150 (LADNVQPISTETTATNSDNPGQ) are disordered. Residues 134–150 (QPISTETTATNSDNPGQ) show a composition bias toward polar residues.

It belongs to the bZIP family. C/EBP subfamily. As to quaternary structure, binds DNA as a dimer and can form stable heterodimers with CEBPA. Can form stable heterodimers with CEBPB. Interacts with ZNF638; this interaction increases transcriptional activation. In terms of tissue distribution, ubiquitous.

The protein localises to the nucleus. In terms of biological role, transcription factor that binds to the promoter and the enhancer regions of target genes. Binds to the promoter and the enhancer of the immunoglobulin heavy chain. Binds to GPE1, a cis-acting element in the G-CSF gene promoter. Binds to the enhancer element PRE-I (positive regulatory element-I) of the IL-4 gene. Binds to the promoter and the enhancer of the alpha-1-fetoprotein gene. The sequence is that of CCAAT/enhancer-binding protein gamma (Cebpg) from Mus musculus (Mouse).